Consider the following 256-residue polypeptide: 5'-nucleotidase SurE (256 aa).

D8, D9, S40, and N92 together coordinate a divalent metal cation.

The protein belongs to the SurE nucleotidase family. It depends on a divalent metal cation as a cofactor.

It is found in the cytoplasm. The catalysed reaction is a ribonucleoside 5'-phosphate + H2O = a ribonucleoside + phosphate. Functionally, nucleotidase that shows phosphatase activity on nucleoside 5'-monophosphates. This Sinorhizobium medicae (strain WSM419) (Ensifer medicae) protein is 5'-nucleotidase SurE.